The following is an 84-amino-acid chain: Kappa-scoloptoxin(11)-Ssm3a (84 aa).

The N-terminal stretch at 1-16 (MSWMFYSFIVFTLAIK) is a signal peptide.

Belongs to the scoloptoxin-11 family. In terms of processing, contains 2 disulfide bonds. Expressed by the venom gland.

Its subcellular location is the secreted. Inhibits voltage-gated potassium channel currents in DRG neurons. 200 nM of the toxin inhibits current amplitude by only 25% and even at concentrations up to 5 uM, the toxin does not inhibit all potassium currents. In vivo, insects injected with this toxin showed signs of neurotoxicity including twitching, paralysis, and body contraction. The chain is Kappa-scoloptoxin(11)-Ssm3a from Scolopendra mutilans (Chinese red-headed centipede).